The following is a 462-amino-acid chain: Syringate O-demethylase (462 aa).

This sequence belongs to the GcvT family.

It carries out the reaction syringate + (6S)-5,6,7,8-tetrahydrofolate = 3-O-methylgallate + (6S)-5-methyl-5,6,7,8-tetrahydrofolate. Its pathway is secondary metabolite metabolism; lignin degradation. Its function is as follows. Involved in the catabolism of syringate. Catalyzes the conversion of syringate to 3-O-methylgallate (3MGA) in the presence of tetrahydrofolate. Has weak activity with vanillate and 3-O-methylgallate. In Sphingobium sp. (strain NBRC 103272 / SYK-6), this protein is Syringate O-demethylase.